The chain runs to 252 residues: Ribosomal RNA small subunit methyltransferase J (252 aa).

Residues 126 to 127 (ER) and D176 contribute to the S-adenosyl-L-methionine site.

Belongs to the methyltransferase superfamily. RsmJ family.

The protein resides in the cytoplasm. It carries out the reaction guanosine(1516) in 16S rRNA + S-adenosyl-L-methionine = N(2)-methylguanosine(1516) in 16S rRNA + S-adenosyl-L-homocysteine + H(+). Specifically methylates the guanosine in position 1516 of 16S rRNA. The protein is Ribosomal RNA small subunit methyltransferase J of Bdellovibrio bacteriovorus (strain ATCC 15356 / DSM 50701 / NCIMB 9529 / HD100).